Consider the following 103-residue polypeptide: G0/G1 switch protein 2 (103 aa).

The tract at residues 80 to 103 (LQEKGKQQDTVLGGRALSNRQHAS) is disordered.

In terms of assembly, directly interacts with BCL2; this interaction prevents the formation of the anti-apoptotic BAX-BCL2 complex. Widely expressed with highest levels in peripheral blood, skeletal muscle and heart, followed by kidney and liver.

It is found in the mitochondrion. In terms of biological role, promotes apoptosis by binding to BCL2, hence preventing the formation of protective BCL2-BAX heterodimers. The polypeptide is G0/G1 switch protein 2 (G0S2) (Homo sapiens (Human)).